The primary structure comprises 467 residues: Asparagine--tRNA ligase (467 aa).

The protein belongs to the class-II aminoacyl-tRNA synthetase family. As to quaternary structure, homodimer.

Its subcellular location is the cytoplasm. It carries out the reaction tRNA(Asn) + L-asparagine + ATP = L-asparaginyl-tRNA(Asn) + AMP + diphosphate + H(+). The polypeptide is Asparagine--tRNA ligase (Haemophilus influenzae (strain PittGG)).